A 136-amino-acid polypeptide reads, in one-letter code: Large ribosomal subunit protein uL16 (136 aa).

Belongs to the universal ribosomal protein uL16 family. As to quaternary structure, part of the 50S ribosomal subunit.

Functionally, binds 23S rRNA and is also seen to make contacts with the A and possibly P site tRNAs. The protein is Large ribosomal subunit protein uL16 of Pectobacterium atrosepticum (strain SCRI 1043 / ATCC BAA-672) (Erwinia carotovora subsp. atroseptica).